Reading from the N-terminus, the 683-residue chain is DNA ligase (683 aa).

NAD(+) contacts are provided by residues 42–46 (DAEYD), 91–92 (SL), and Glu122. Lys124 acts as the N6-AMP-lysine intermediate in catalysis. Arg145, Glu182, Lys299, and Lys323 together coordinate NAD(+). Positions 417, 420, 435, and 441 each coordinate Zn(2+). The BRCT domain maps to 602-683 (APQGVLAGKT…MRKLLEGQTT (82 aa)).

This sequence belongs to the NAD-dependent DNA ligase family. LigA subfamily. Requires Mg(2+) as cofactor. Mn(2+) serves as cofactor.

It catalyses the reaction NAD(+) + (deoxyribonucleotide)n-3'-hydroxyl + 5'-phospho-(deoxyribonucleotide)m = (deoxyribonucleotide)n+m + AMP + beta-nicotinamide D-nucleotide.. DNA ligase that catalyzes the formation of phosphodiester linkages between 5'-phosphoryl and 3'-hydroxyl groups in double-stranded DNA using NAD as a coenzyme and as the energy source for the reaction. It is essential for DNA replication and repair of damaged DNA. This Paraburkholderia phymatum (strain DSM 17167 / CIP 108236 / LMG 21445 / STM815) (Burkholderia phymatum) protein is DNA ligase.